A 435-amino-acid chain; its full sequence is 5-methylthioadenosine/S-adenosylhomocysteine deaminase (435 aa).

2 residues coordinate Zn(2+): His-65 and His-67. Residues Glu-94, Arg-150, and His-189 each contribute to the substrate site. His-216 is a Zn(2+) binding site. Substrate contacts are provided by Glu-219 and Asp-304. Asp-304 serves as a coordination point for Zn(2+).

Belongs to the metallo-dependent hydrolases superfamily. MTA/SAH deaminase family. Requires Zn(2+) as cofactor.

It carries out the reaction S-adenosyl-L-homocysteine + H2O + H(+) = S-inosyl-L-homocysteine + NH4(+). The catalysed reaction is S-methyl-5'-thioadenosine + H2O + H(+) = S-methyl-5'-thioinosine + NH4(+). Functionally, catalyzes the deamination of 5-methylthioadenosine and S-adenosyl-L-homocysteine into 5-methylthioinosine and S-inosyl-L-homocysteine, respectively. Is also able to deaminate adenosine. The sequence is that of 5-methylthioadenosine/S-adenosylhomocysteine deaminase from Bacillus cereus (strain 03BB102).